The following is a 639-amino-acid chain: MEKRKSIFFANDSEDNTSSGDLSSFTKRGTITPGKIANAREGELSQMIDVESEQKYQEIIELLVTGGYFRARISGLSPFDKVVGGMAWSITASNVDVDADLFFQENSNIKQKVSLSEELIKALNRMKCPFPLQAQHITLLNYITLFPIIRWLITKVIETREETGDLLRMYSISMFSKDYIAPIDEDMKKSLNESCDFIESVEKRYKPTRKFKRANNTKSTPTQTLLEYGKLHRISRLPTNINENKEAAQKLESQLSGKDGSGKDTTEAEREEEEKRIKQMMKGMKGVEGDALSKVSGGVLKSFLPSEEITNLSERYGDMSDLGGAEGAKMMAEKLHRQKITNLEKLIQQKNQELEQIINAHSERQTELEQLQLLVGKKQAFNERIIRETEKLDALETPENTKALQALRSLVLLNETLIAQEELFKQSCKRQMVEYKQKIEQLLSQDASTQEDLQDSDRQQQIQQAFDSDIGKLKKLKLLLNKKNRDISLIQRYLDELPSRAELLQYQRQFVELSEQSSSKLTETRQYYTTYNTFEDKKTLLENELSILNSIQSKYSIAMSSTNNKELFIKSMDQIIDGIQQVLDKSENKWNVEKVRHDTLSDQYMTLLDQERNYYKLTKDFEEECRKNELLIKKLNELQ.

Positions 250 to 275 are disordered; the sequence is KLESQLSGKDGSGKDTTEAEREEEEK. A compositionally biased stretch (basic and acidic residues) spans 260-275; it reads GSGKDTTEAEREEEEK. A coiled-coil region spans residues 332–492; it reads AEKLHRQKIT…KNRDISLIQR (161 aa).

This sequence belongs to the CCDC93 family.

The sequence is that of Coiled-coil domain-containing protein 93 homolog from Dictyostelium discoideum (Social amoeba).